A 386-amino-acid polypeptide reads, in one-letter code: Ferredoxin--NADP reductase (386 aa).

Residues 9–67 (SRMFRYEVVGLRQTAETEKTNYAIRNSGSQFFNVPYDRMNQFMQQITRWGGKIVSIQPL) enclose the CpcD-like domain. The FAD-binding FR-type domain occupies 104-228 (NNPCIGKVIS…TGPVGKEMLL (125 aa)). Residues 163 to 166 (RLYS), 184 to 186 (CVR), tyrosine 190, 202 to 204 (VCS), and threonine 243 contribute to the FAD site. NADP(+)-binding residues include serine 166 and arginine 186. NADP(+) is bound by residues threonine 243, 275 to 276 (VA), 305 to 306 (SR), 315 to 319 (KMYIQ), 344 to 345 (GL), and glutamate 384.

This sequence belongs to the ferredoxin--NADP reductase type 1 family. The cofactor is FAD.

The protein resides in the cellular thylakoid membrane. The enzyme catalyses 2 reduced [2Fe-2S]-[ferredoxin] + NADP(+) + H(+) = 2 oxidized [2Fe-2S]-[ferredoxin] + NADPH. The polypeptide is Ferredoxin--NADP reductase (petH) (Thermosynechococcus vestitus (strain NIES-2133 / IAM M-273 / BP-1)).